The chain runs to 333 residues: GTPase Obg (333 aa).

The 159-residue stretch at 1-159 folds into the Obg domain; it reads MKFIDEATIT…ATVRLELKLL (159 aa). The tract at residues 63-85 is disordered; the sequence is KQFAAPNGAPGEGRQKTGKSGDD. Positions 75–84 are enriched in basic and acidic residues; it reads GRQKTGKSGD. The region spanning 160-329 is the OBG-type G domain; sequence ADVGLIGLPN…LKKHLFELLC (170 aa). GTP is bound by residues 166 to 173, 191 to 195, 213 to 216, 283 to 286, and 310 to 312; these read GLPNAGKS, FTTLS, DIPG, NKMD, and SAA. Mg(2+) contacts are provided by Ser173 and Thr193.

This sequence belongs to the TRAFAC class OBG-HflX-like GTPase superfamily. OBG GTPase family. Monomer. The cofactor is Mg(2+).

It is found in the cytoplasm. Its function is as follows. An essential GTPase which binds GTP, GDP and possibly (p)ppGpp with moderate affinity, with high nucleotide exchange rates and a fairly low GTP hydrolysis rate. Plays a role in control of the cell cycle, stress response, ribosome biogenesis and in those bacteria that undergo differentiation, in morphogenesis control. This Desulfosudis oleivorans (strain DSM 6200 / JCM 39069 / Hxd3) (Desulfococcus oleovorans) protein is GTPase Obg.